A 213-amino-acid chain; its full sequence is dITP/XTP pyrophosphatase (213 aa).

Residue 17–22 (SNNAGK) participates in substrate binding. Residue Asp-78 is the Proton acceptor of the active site. Residue Asp-78 coordinates Mg(2+). Substrate-binding positions include Ser-79, 164 to 167 (FGYD), Lys-187, and 192 to 193 (HR).

Belongs to the HAM1 NTPase family. In terms of assembly, homodimer. Requires Mg(2+) as cofactor.

The enzyme catalyses XTP + H2O = XMP + diphosphate + H(+). The catalysed reaction is dITP + H2O = dIMP + diphosphate + H(+). It catalyses the reaction ITP + H2O = IMP + diphosphate + H(+). In terms of biological role, pyrophosphatase that catalyzes the hydrolysis of nucleoside triphosphates to their monophosphate derivatives, with a high preference for the non-canonical purine nucleotides XTP (xanthosine triphosphate), dITP (deoxyinosine triphosphate) and ITP. Seems to function as a house-cleaning enzyme that removes non-canonical purine nucleotides from the nucleotide pool, thus preventing their incorporation into DNA/RNA and avoiding chromosomal lesions. The chain is dITP/XTP pyrophosphatase from Bordetella parapertussis (strain 12822 / ATCC BAA-587 / NCTC 13253).